The sequence spans 186 residues: Peptidyl-tRNA hydrolase (186 aa).

Tyr14 serves as a coordination point for tRNA. His19 acts as the Proton acceptor in catalysis. TRNA is bound by residues Tyr61, Asn63, and Asn107.

It belongs to the PTH family. As to quaternary structure, monomer.

Its subcellular location is the cytoplasm. The catalysed reaction is an N-acyl-L-alpha-aminoacyl-tRNA + H2O = an N-acyl-L-amino acid + a tRNA + H(+). Its function is as follows. Hydrolyzes ribosome-free peptidyl-tRNAs (with 1 or more amino acids incorporated), which drop off the ribosome during protein synthesis, or as a result of ribosome stalling. Functionally, catalyzes the release of premature peptidyl moieties from peptidyl-tRNA molecules trapped in stalled 50S ribosomal subunits, and thus maintains levels of free tRNAs and 50S ribosomes. This Helicobacter acinonychis (strain Sheeba) protein is Peptidyl-tRNA hydrolase.